The following is a 785-amino-acid chain: Endonuclease MutS2 (785 aa).

335 to 342 (GPNTGGKT) is an ATP binding site. In terms of domain architecture, Smr spans 710-785 (LDLRGERYEE…GLGNTVVELR (76 aa)). Residues 764 to 785 (VKSARDGGANEGGLGNTVVELR) form a disordered region.

This sequence belongs to the DNA mismatch repair MutS family. MutS2 subfamily. As to quaternary structure, homodimer. Binds to stalled ribosomes, contacting rRNA.

Its function is as follows. Endonuclease that is involved in the suppression of homologous recombination and thus may have a key role in the control of bacterial genetic diversity. Acts as a ribosome collision sensor, splitting the ribosome into its 2 subunits. Detects stalled/collided 70S ribosomes which it binds and splits by an ATP-hydrolysis driven conformational change. Acts upstream of the ribosome quality control system (RQC), a ribosome-associated complex that mediates the extraction of incompletely synthesized nascent chains from stalled ribosomes and their subsequent degradation. Probably generates substrates for RQC. The polypeptide is Endonuclease MutS2 (Halalkalibacterium halodurans (strain ATCC BAA-125 / DSM 18197 / FERM 7344 / JCM 9153 / C-125) (Bacillus halodurans)).